The sequence spans 103 residues: Pyrimidine/purine nucleoside phosphorylase (103 aa).

This sequence belongs to the nucleoside phosphorylase PpnP family.

The catalysed reaction is a purine D-ribonucleoside + phosphate = a purine nucleobase + alpha-D-ribose 1-phosphate. It catalyses the reaction adenosine + phosphate = alpha-D-ribose 1-phosphate + adenine. The enzyme catalyses cytidine + phosphate = cytosine + alpha-D-ribose 1-phosphate. It carries out the reaction guanosine + phosphate = alpha-D-ribose 1-phosphate + guanine. The catalysed reaction is inosine + phosphate = alpha-D-ribose 1-phosphate + hypoxanthine. It catalyses the reaction thymidine + phosphate = 2-deoxy-alpha-D-ribose 1-phosphate + thymine. The enzyme catalyses uridine + phosphate = alpha-D-ribose 1-phosphate + uracil. It carries out the reaction xanthosine + phosphate = alpha-D-ribose 1-phosphate + xanthine. In terms of biological role, catalyzes the phosphorolysis of diverse nucleosides, yielding D-ribose 1-phosphate and the respective free bases. Can use uridine, adenosine, guanosine, cytidine, thymidine, inosine and xanthosine as substrates. Also catalyzes the reverse reactions. The sequence is that of Pyrimidine/purine nucleoside phosphorylase from Shewanella baltica (strain OS155 / ATCC BAA-1091).